The chain runs to 343 residues: Arginine N-succinyltransferase (343 aa).

L125 is a binding site for succinyl-CoA. H229 functions as the Proton donor in the catalytic mechanism.

Belongs to the arginine N-succinyltransferase family.

The catalysed reaction is succinyl-CoA + L-arginine = N(2)-succinyl-L-arginine + CoA + H(+). Its pathway is amino-acid degradation; L-arginine degradation via AST pathway; L-glutamate and succinate from L-arginine: step 1/5. Its function is as follows. Catalyzes the transfer of succinyl-CoA to arginine to produce N(2)-succinylarginine. In Photorhabdus laumondii subsp. laumondii (strain DSM 15139 / CIP 105565 / TT01) (Photorhabdus luminescens subsp. laumondii), this protein is Arginine N-succinyltransferase.